Consider the following 77-residue polypeptide: Conotoxin PnMKLT1-0122 (77 aa).

A signal peptide spans 1 to 22 (MKLTCMMIVAVLFLTAWTFATA). Residues 23–49 (EDPRNGLENLFSKAHHEMKNPEDSKLN) constitute a propeptide that is removed on maturation. 3 disulfide bridges follow: Cys52–Cys67, Cys59–Cys71, and Cys66–Cys76.

It belongs to the conotoxin O1 superfamily. As to expression, expressed by the venom duct.

The protein resides in the secreted. The protein is Conotoxin PnMKLT1-0122 of Conus pennaceus (Feathered cone).